The sequence spans 526 residues: Osmo-independent choline transporter BetT1 (526 aa).

The Cytoplasmic portion of the chain corresponds to 1–17; the sequence is MWSKRDEQKTYPPIRLN. A helical transmembrane segment spans residues 18–38; it reads PFVFWSSAISISIFGMLFVLF. Topologically, residues 39–56 are periplasmic; sequence PETSQHGLTWIQQQVNQL. Residues 57-77 traverse the membrane as a helical segment; it reads FGWYYMLVIILSLGFVAWLAF. Topologically, residues 78 to 93 are cytoplasmic; that stretch reads SQVGNIPLGKAQDKPE. Residues 94–114 form a helical membrane-spanning segment; sequence FGYLVWTSMLFSAGIGIALLY. Topologically, residues 115–148 are periplasmic; sequence YGVAEPVDHFLRPPEGQGGTVEAAQNAMMYSFLH. The helical transmembrane segment at 149–169 threads the bilayer; it reads WGIHGWVLYALVGVTLGYFAF. At 170 to 200 the chain is on the cytoplasmic side; the sequence is RRDLPLALRSALYPIFGERIHGLVGHMVDGF. The helical transmembrane segment at 201–221 threads the bilayer; the sequence is GILATIISLVTNLGIGALVMI. The Periplasmic portion of the chain corresponds to 222–236; sequence SGISYLFPDLPNTSS. Residues 237–257 traverse the membrane as a helical segment; sequence TLVVTVIMMMLVATLTTVIGI. Residues 258–272 are Cytoplasmic-facing; sequence EKGLAWLSRINLRLL. A helical transmembrane segment spans residues 273–293; sequence YLLLLFVFLTGPTNHLLNGLV. Topologically, residues 294–323 are periplasmic; sequence QNTGDYLSHFVQKSFDLYLYDKNATGWLAS. A helical membrane pass occupies residues 324 to 344; that stretch reads WTIFYWAWWIAWAPFVGMFIA. The Cytoplasmic segment spans residues 345–354; that stretch reads RISKGRTIRE. A helical transmembrane segment spans residues 355–375; the sequence is VVLGVCLIPLGFTLAWISIFG. The Periplasmic segment spans residues 376–417; it reads NTAIDLILNHGQQIIGSLVIQDPALSLFKLLEYLPFHPYVAG. Residues 418-438 form a helical membrane-spanning segment; sequence IVVVICFVLFLTPVGSGTLMI. The Cytoplasmic segment spans residues 439-457; that stretch reads ANLSSQGGSSDSDSPIWLR. Residues 458–478 form a helical membrane-spanning segment; that stretch reads VFWSIAITIVSIGLLLAGSFS. Residues 479–482 are Periplasmic-facing; the sequence is AMQS. Residues 483–503 form a helical membrane-spanning segment; the sequence is AVVLCGLPFSVILLLYMFGLA. The Cytoplasmic portion of the chain corresponds to 504-526; sequence KALKQETQQPVVESHTTETSGSD.

It belongs to the BCCT transporter (TC 2.A.15) family.

It localises to the cell inner membrane. In terms of biological role, sodium-independent high-affinity choline uptake system. Uptake is not proton coupled. May play a role in metabolic adaptation to choline-containing environments. The protein is Osmo-independent choline transporter BetT1 of Acinetobacter baylyi (strain ATCC 33305 / BD413 / ADP1).